A 144-amino-acid chain; its full sequence is Large ribosomal subunit protein uL16 (144 aa).

Belongs to the universal ribosomal protein uL16 family. Part of the 50S ribosomal subunit.

Its function is as follows. Binds 23S rRNA and is also seen to make contacts with the A and possibly P site tRNAs. This chain is Large ribosomal subunit protein uL16, found in Halalkalibacterium halodurans (strain ATCC BAA-125 / DSM 18197 / FERM 7344 / JCM 9153 / C-125) (Bacillus halodurans).